Consider the following 793-residue polypeptide: Ferredoxin/F(420)H(2)-dependent CoB-CoM heterodisulfide reductase subunit A (793 aa).

Residue 147 to 170 (GGGVAGIEAALNLAEAGFPVTMVE) coordinates FAD. 4Fe-4S ferredoxin-type domains are found at residues 233 to 264 (RKPR…PMNY), 282 to 311 (QVVL…YEQK), 571 to 600 (MGAH…IENK), and 601 to 629 (KAVV…MRNF). Residues Cys-243, Cys-246, Cys-250, Cys-254, Cys-291, Cys-294, Cys-297, Cys-301, Cys-580, Cys-583, Cys-586, Cys-590, Cys-609, Cys-612, Cys-615, and Cys-619 each contribute to the [4Fe-4S] cluster site.

Belongs to the HdrA family. The ferredoxin/F(420)H(2)-dependent CoB-CoM heterodisulfide reductase is composed of three subunits; HdrA2, HdrB2 and HdrC2. The cofactor is [4Fe-4S] cluster. It depends on [2Fe-2S] cluster as a cofactor. Requires FAD as cofactor.

Its subcellular location is the cytoplasm. The catalysed reaction is coenzyme B + coenzyme M + 2 oxidized [2Fe-2S]-[ferredoxin] = coenzyme M-coenzyme B heterodisulfide + 2 reduced [2Fe-2S]-[ferredoxin] + 2 H(+). It catalyses the reaction coenzyme B + 2 oxidized coenzyme F420-(gamma-L-Glu)(n) + coenzyme M + 2 reduced [2Fe-2S]-[ferredoxin] + 4 H(+) = coenzyme M-coenzyme B heterodisulfide + 2 reduced coenzyme F420-(gamma-L-Glu)(n) + 2 oxidized [2Fe-2S]-[ferredoxin]. The protein operates within cofactor metabolism; coenzyme M-coenzyme B heterodisulfide reduction; coenzyme B and coenzyme M from coenzyme M-coenzyme B heterodisulfide: step 1/1. Its function is as follows. Part of a complex that catalyzes the reversible reduction of CoM-S-S-CoB to the thiol-coenzymes H-S-CoM (coenzyme M) and H-S-CoB (coenzyme B). Catalyzes the transfer of electrons from ferredoxin to CoM-S-S-CoB during methanogenesis from acetate. Electrons transfer from ferredoxin to CoM-S-S-CoB via HdrA2, HdrC2 and HdrB2. In addition, the complex can use electron bifurcation to direct electron pairs from reduced coenzyme F420 towards the reduction of both ferredoxin and CoB-CoM heterodisulfide. This activity may take place during Fe(III)-dependent anaerobic methane oxidation. This is Ferredoxin/F(420)H(2)-dependent CoB-CoM heterodisulfide reductase subunit A from Methanosarcina acetivorans (strain ATCC 35395 / DSM 2834 / JCM 12185 / C2A).